A 61-amino-acid chain; its full sequence is Large ribosomal subunit protein uL30 (61 aa).

The protein belongs to the universal ribosomal protein uL30 family. As to quaternary structure, part of the 50S ribosomal subunit.

The sequence is that of Large ribosomal subunit protein uL30 from Corynebacterium efficiens (strain DSM 44549 / YS-314 / AJ 12310 / JCM 11189 / NBRC 100395).